The sequence spans 385 residues: Chaperone protein DnaJ (385 aa).

The 66-residue stretch at 5-70 (DFYDVLGVSR…QSRAAYDQFG (66 aa)) folds into the J domain. The CR-type zinc finger occupies 143-221 (GKKAQVRVPG…CHGAGRVEKE (79 aa)). Zn(2+)-binding residues include cysteine 156, cysteine 159, cysteine 173, cysteine 176, cysteine 195, cysteine 198, cysteine 209, and cysteine 212. 4 CXXCXGXG motif repeats span residues 156-163 (CEVCTGTG), 173-180 (CPTCQGHG), 195-202 (CPTCHGRG), and 209-216 (CTNCHGAG).

This sequence belongs to the DnaJ family. In terms of assembly, homodimer. Requires Zn(2+) as cofactor.

It localises to the cytoplasm. In terms of biological role, participates actively in the response to hyperosmotic and heat shock by preventing the aggregation of stress-denatured proteins and by disaggregating proteins, also in an autonomous, DnaK-independent fashion. Unfolded proteins bind initially to DnaJ; upon interaction with the DnaJ-bound protein, DnaK hydrolyzes its bound ATP, resulting in the formation of a stable complex. GrpE releases ADP from DnaK; ATP binding to DnaK triggers the release of the substrate protein, thus completing the reaction cycle. Several rounds of ATP-dependent interactions between DnaJ, DnaK and GrpE are required for fully efficient folding. Also involved, together with DnaK and GrpE, in the DNA replication of plasmids through activation of initiation proteins. This chain is Chaperone protein DnaJ, found in Parvibaculum lavamentivorans (strain DS-1 / DSM 13023 / NCIMB 13966).